Reading from the N-terminus, the 449-residue chain is UDP-glycosyltransferase 76E6 (449 aa).

UDP-alpha-D-glucose is bound by residues S274, 333 to 335, 350 to 358, and 372 to 375; these read APQ, HCGWNSTLE, and HGEQ.

The protein belongs to the UDP-glycosyltransferase family.

The polypeptide is UDP-glycosyltransferase 76E6 (UGT76E6) (Arabidopsis thaliana (Mouse-ear cress)).